Consider the following 469-residue polypeptide: 3-isopropylmalate dehydratase large subunit (469 aa).

[4Fe-4S] cluster-binding residues include Cys-350, Cys-410, and Cys-413.

This sequence belongs to the aconitase/IPM isomerase family. LeuC type 1 subfamily. In terms of assembly, heterodimer of LeuC and LeuD. It depends on [4Fe-4S] cluster as a cofactor.

The enzyme catalyses (2R,3S)-3-isopropylmalate = (2S)-2-isopropylmalate. The protein operates within amino-acid biosynthesis; L-leucine biosynthesis; L-leucine from 3-methyl-2-oxobutanoate: step 2/4. Catalyzes the isomerization between 2-isopropylmalate and 3-isopropylmalate, via the formation of 2-isopropylmaleate. This chain is 3-isopropylmalate dehydratase large subunit, found in Brucella anthropi (strain ATCC 49188 / DSM 6882 / CCUG 24695 / JCM 21032 / LMG 3331 / NBRC 15819 / NCTC 12168 / Alc 37) (Ochrobactrum anthropi).